The sequence spans 194 residues: Protein GrpE (194 aa).

Belongs to the GrpE family. In terms of assembly, homodimer.

Its subcellular location is the cytoplasm. Its function is as follows. Participates actively in the response to hyperosmotic and heat shock by preventing the aggregation of stress-denatured proteins, in association with DnaK and GrpE. It is the nucleotide exchange factor for DnaK and may function as a thermosensor. Unfolded proteins bind initially to DnaJ; upon interaction with the DnaJ-bound protein, DnaK hydrolyzes its bound ATP, resulting in the formation of a stable complex. GrpE releases ADP from DnaK; ATP binding to DnaK triggers the release of the substrate protein, thus completing the reaction cycle. Several rounds of ATP-dependent interactions between DnaJ, DnaK and GrpE are required for fully efficient folding. In Aliivibrio fischeri (strain ATCC 700601 / ES114) (Vibrio fischeri), this protein is Protein GrpE.